A 450-amino-acid polypeptide reads, in one-letter code: UDP-N-acetylmuramoylalanine--D-glutamate ligase (450 aa).

Residue 119-125 coordinates ATP; that stretch reads GSNGKTT.

The protein belongs to the MurCDEF family.

The protein localises to the cytoplasm. It carries out the reaction UDP-N-acetyl-alpha-D-muramoyl-L-alanine + D-glutamate + ATP = UDP-N-acetyl-alpha-D-muramoyl-L-alanyl-D-glutamate + ADP + phosphate + H(+). It functions in the pathway cell wall biogenesis; peptidoglycan biosynthesis. In terms of biological role, cell wall formation. Catalyzes the addition of glutamate to the nucleotide precursor UDP-N-acetylmuramoyl-L-alanine (UMA). The sequence is that of UDP-N-acetylmuramoylalanine--D-glutamate ligase from Streptococcus pneumoniae serotype 4 (strain ATCC BAA-334 / TIGR4).